A 232-amino-acid polypeptide reads, in one-letter code: Ribosomal RNA small subunit methyltransferase G (232 aa).

S-adenosyl-L-methionine-binding positions include G75, F80, 126–127 (AE), and R143.

The protein belongs to the methyltransferase superfamily. RNA methyltransferase RsmG family.

Its subcellular location is the cytoplasm. In terms of biological role, specifically methylates the N7 position of a guanine in 16S rRNA. The chain is Ribosomal RNA small subunit methyltransferase G from Fusobacterium nucleatum subsp. nucleatum (strain ATCC 25586 / DSM 15643 / BCRC 10681 / CIP 101130 / JCM 8532 / KCTC 2640 / LMG 13131 / VPI 4355).